Reading from the N-terminus, the 358-residue chain is Methylthioribose-1-phosphate isomerase (358 aa).

Substrate-binding positions include 54–56 (RGA), R96, and Q205. D246 acts as the Proton donor in catalysis. Residue 256–257 (NK) coordinates substrate.

Belongs to the eIF-2B alpha/beta/delta subunits family. MtnA subfamily.

It carries out the reaction 5-(methylsulfanyl)-alpha-D-ribose 1-phosphate = 5-(methylsulfanyl)-D-ribulose 1-phosphate. It functions in the pathway amino-acid biosynthesis; L-methionine biosynthesis via salvage pathway; L-methionine from S-methyl-5-thio-alpha-D-ribose 1-phosphate: step 1/6. Its function is as follows. Catalyzes the interconversion of methylthioribose-1-phosphate (MTR-1-P) into methylthioribulose-1-phosphate (MTRu-1-P). This is Methylthioribose-1-phosphate isomerase from Ectopseudomonas mendocina (strain ymp) (Pseudomonas mendocina).